The primary structure comprises 98 residues: Small ribosomal subunit protein uS19 (98 aa).

The interval T77–K98 is disordered.

The protein belongs to the universal ribosomal protein uS19 family.

Protein S19 forms a complex with S13 that binds strongly to the 16S ribosomal RNA. This Chlorobium limicola (strain DSM 245 / NBRC 103803 / 6330) protein is Small ribosomal subunit protein uS19.